Here is a 383-residue protein sequence, read N- to C-terminus: Delta(12)-fatty-acid desaturase FAD2 (383 aa).

A run of 2 helical transmembrane segments spans residues 56 to 76 and 84 to 104; these read VVYDLTVAFIFYYIATNYFHL and VAWPIYWALQGCVLTGVWVIA. The Histidine box-1 motif lies at 105-109; the sequence is HECGH. A helical membrane pass occupies residues 117-137; the sequence is LLDDIVGLVLHSCLLVPYFSW. A Histidine box-2 motif is present at residues 141 to 145; that stretch reads HRRHH. A run of 3 helical transmembrane segments spans residues 179 to 199, 225 to 245, and 249 to 269; these read LFTLTITLTLGWPLYLAFNVS, IYISDAGVLAVTFGLYRLAAA, and AWVICVYGVPLLIVNAFLVMI. A Histidine box-3 motif is present at residues 315–319; the sequence is HVAHH.

This sequence belongs to the fatty acid desaturase type 1 family. Expressed in leaves and seeds.

The protein localises to the endoplasmic reticulum membrane. The catalysed reaction is (9Z)-octadecenoyl-CoA + 2 Fe(II)-[cytochrome b5] + O2 + 2 H(+) = (9Z,12Z)-octadecadienoyl-CoA + 2 Fe(III)-[cytochrome b5] + 2 H2O. The enzyme catalyses (9Z)-hexadecenoyl-CoA + 2 Fe(II)-[cytochrome b5] + O2 + 2 H(+) = (9Z,12Z)-hexadecadienoyl-CoA + 2 Fe(III)-[cytochrome b5] + 2 H2O. It functions in the pathway lipid metabolism; polyunsaturated fatty acid biosynthesis. Catalyzes the desaturation of oleic acid (18:1(9Z)) to linoleic acid (18:2(9Z,12Z)). This Vernicia fordii (Tung) protein is Delta(12)-fatty-acid desaturase FAD2.